The following is a 248-amino-acid chain: MSFVVIIPARFSSTRLPGKPLVDINGKPMIVHVLERARESGAERIIVATDHEDVARAVEAAGGEVCMTRADHQSGTERLAEVVEKCGFSDDTVIVNVQGDEPMIPAVIIRQVAENLAQRQVGMATLAVPIHSAEEAFNPNAVKVVLDAEGYALYFSRATIPWDRDRFAKSLETVGDTCLRHLGIYGYRAGFIRRYVSWQPSPLEHIEMLEQLRVLWYGEKIHVAVAKAVPGTGVDTADDLERVRAEMR.

The protein belongs to the KdsB family.

The protein localises to the cytoplasm. It carries out the reaction 3-deoxy-alpha-D-manno-oct-2-ulosonate + CTP = CMP-3-deoxy-beta-D-manno-octulosonate + diphosphate. The protein operates within nucleotide-sugar biosynthesis; CMP-3-deoxy-D-manno-octulosonate biosynthesis; CMP-3-deoxy-D-manno-octulosonate from 3-deoxy-D-manno-octulosonate and CTP: step 1/1. Its pathway is bacterial outer membrane biogenesis; lipopolysaccharide biosynthesis. Activates KDO (a required 8-carbon sugar) for incorporation into bacterial lipopolysaccharide in Gram-negative bacteria. This chain is 3-deoxy-manno-octulosonate cytidylyltransferase, found in Salmonella agona (strain SL483).